Consider the following 360-residue polypeptide: Transcription factor MYB39 (360 aa).

HTH myb-type domains follow at residues 10–62 (DKGV…MNYL) and 63–117 (RPDI…RKKL). DNA-binding regions (H-T-H motif) lie at residues 38-62 (WRSL…MNYL) and 90-113 (WSKI…NTHM). The tract at residues 299–324 (PSTGSVSVSPETTSLNHPSTAQHSSG) is disordered.

It is found in the nucleus. In Arabidopsis thaliana (Mouse-ear cress), this protein is Transcription factor MYB39 (MYB39).